The chain runs to 118 residues: Large ribosomal subunit protein uL18 (118 aa).

The protein belongs to the universal ribosomal protein uL18 family. As to quaternary structure, part of the 50S ribosomal subunit; part of the 5S rRNA/L5/L18/L25 subcomplex. Contacts the 5S and 23S rRNAs.

Its function is as follows. This is one of the proteins that bind and probably mediate the attachment of the 5S RNA into the large ribosomal subunit, where it forms part of the central protuberance. This chain is Large ribosomal subunit protein uL18, found in Rickettsia felis (strain ATCC VR-1525 / URRWXCal2) (Rickettsia azadi).